We begin with the raw amino-acid sequence, 727 residues long: Adhesion G protein-coupled receptor L4 (727 aa).

Positions Met1–Phe19 are cleaved as a signal peptide. Residues Leu20–Ile467 lie on the Extracellular side of the membrane. Residues Asp52 to Glu90 form the EGF-like 1; calcium-binding domain. 6 cysteine pairs are disulfide-bonded: Cys56–Cys69, Cys63–Cys78, Cys106–Cys118, Cys112–Cys127, Cys408–Cys438, and Cys426–Cys440. The EGF-like 2; calcium-binding domain maps to Asp102–Pro139. The GAIN-B domain maps to Thr282–Asn456. A GPS region spans residues Cys408–Asn456. A helical transmembrane segment spans residues Thr468–Phe488. Residues Phe489 to Arg496 lie on the Cytoplasmic side of the membrane. The chain crosses the membrane as a helical span at residues Thr497–Gly517. The Extracellular segment spans residues Ile518–His535. The chain crosses the membrane as a helical span at residues Tyr536 to Val556. The Cytoplasmic segment spans residues Val557 to Arg568. A helical transmembrane segment spans residues Asn569 to Gly589. Topologically, residues Tyr590–Trp609 are extracellular. Residues Ser610–Ile630 traverse the membrane as a helical segment. Residues Tyr631–Ala654 are Cytoplasmic-facing. Residues Arg655–Ile675 traverse the membrane as a helical segment. Residues Leu676–Thr682 are Extracellular-facing. A helical transmembrane segment spans residues Ala683–Val703.

This sequence belongs to the G-protein coupled receptor 2 family. Adhesion G-protein coupled receptor (ADGR) subfamily. As to quaternary structure, heterodimer of 2 chains generated by proteolytic processing; the large extracellular N-terminal fragment and the membrane-bound C-terminal fragment predominantly remain associated and non-covalently linked. In terms of processing, autoproteolytically processed at the GPS region of the GAIN-B domain; this cleavage modulates receptor activity.

It is found in the cell membrane. In terms of biological role, orphan receptor that plays a role in vessel formation. This is Adhesion G protein-coupled receptor L4 from Danio rerio (Zebrafish).